A 454-amino-acid polypeptide reads, in one-letter code: MPQKTSKSKSSRTRYIEDSDDETRGRSRNRSIEKSRSRSLDKSQKKSRDKSLTRSRSKSPEKSKSRSKSLTRSRSKSPKKCITGNRKNSKHTKKDNEYTTEESDEESDDESDGETNEESDEELDNKSDGESDEEISEESDEEISEESDEDVPEEEYDDNDIRNIIIENINNEFARGKFGDFNVIIMKDNGFINATKLCKNAGSDFYHWKETKKAKELINELISSPGIKGDEVISTITGGKLTEIRGTYAHPKLIIQIAAWCSAEYALKVSDIVIEYHAKEAIEQKEKLLKKKDDKIDKLSKKIDEQKKEIKKLLEQGNEVLGYAKDTNRKINHVVNERVPYSDKPEIEHQLIIMKNNDKDKKQYKYSALRVMNKSKSSALSRYYKSHPKGNVILTIKYTPNSMHLWNECKDDLHKKKIKLSKKSSKFNLREDYTEKQLIKDIKKIHNARLQHPN.

Basic residues predominate over residues 1–12; the sequence is MPQKTSKSKSSR. The disordered stretch occupies residues 1 to 159; that stretch reads MPQKTSKSKS…DVPEEEYDDN (159 aa). A compositionally biased stretch (basic and acidic residues) spans 14–64; sequence RYIEDSDDETRGRSRNRSIEKSRSRSLDKSQKKSRDKSLTRSRSKSPEKSK. Over residues 65 to 79 the composition is skewed to basic residues; the sequence is SRSKSLTRSRSKSPK. Acidic residues-rich tracts occupy residues 98 to 123 and 130 to 158; these read YTTE…DEEL and ESDE…EYDD. Residues 172–276 form the KilA-N domain; that stretch reads EFARGKFGDF…LKVSDIVIEY (105 aa).

The polypeptide is Putative KilA-N domain-containing protein L4 (Acanthamoeba polyphaga mimivirus (APMV)).